The primary structure comprises 220 residues: Phosphatidylinositol phosphate synthase (220 aa).

2 helical membrane-spanning segments follow: residues 21 to 46 and 52 to 72; these read LLRA…ALTL and LFWG…DGAM. Position 29 to 32 (29 to 32) interacts with a CDP-1,2-diacyl-sn-glycerol; that stretch reads DTVT. 2 residues coordinate Mg(2+): aspartate 66 and aspartate 69. A CDP-1,2-diacyl-sn-glycerol-binding residues include glycine 70, arginine 74, and threonine 80. Mg(2+)-binding residues include aspartate 87 and aspartate 91. Aspartate 91 functions as the Proton acceptor in the catalytic mechanism. 4 helical membrane passes run 93–110, 116–134, 154–171, and 177–194; these read VADG…AFGW, VVAT…YVKA, LIIV…GVQW, and MWVL…RMHA.

It belongs to the CDP-alcohol phosphatidyltransferase class-I family. As to quaternary structure, homodimer. The cofactor is Mg(2+).

It localises to the cell membrane. The enzyme catalyses a CDP-1,2-diacyl-sn-glycerol + 1D-myo-inositol 3-phosphate = a 1,2-diacyl-sn-glycero-3-phospho-(1D-myo-inositol-3-phosphate) + CMP + H(+). It carries out the reaction 1,2-di-(9Z-octadecenoyl)-sn-glycero-3-cytidine-5'-diphosphate + 1D-myo-inositol 3-phosphate = 1,2-di-(9Z-octadecenoyl)-sn-glycero-3-phospho-(1D-myo-inositol-3-phosphate) + CMP + H(+). Its pathway is phospholipid metabolism; phosphatidylinositol phosphate biosynthesis. Its function is as follows. Catalyzes the conjugation of the 1'-hydroxyl group of D-myo-inositol-3-phosphate (also named L-myo-inositol-1-phosphate) with a lipid tail of cytidine diphosphate diacylglycerol (CDP-DAG), forming phosphatidylinositol phosphate (PIP) and CMP. PIP is a precursor of phosphatidylinositol (PI) which is an essential lipid for mycobacteria required for formation of their cell wall. The chain is Phosphatidylinositol phosphate synthase from Mycobacteroides abscessus (strain ATCC 19977 / DSM 44196 / CCUG 20993 / CIP 104536 / JCM 13569 / NCTC 13031 / TMC 1543 / L948) (Mycobacterium abscessus).